Reading from the N-terminus, the 1212-residue chain is uncharacterized protein (1212 aa).

Residues 1–31 (MASIQTKLVSQPQTQQPLQNGFFNNYQQNIY) show a composition bias toward polar residues. 7 disordered regions span residues 1–70 (MASI…HLQQ), 119–169 (PQAQ…FGTN), 211–231 (SLNN…SNNN), 248–374 (INIG…NNNK), 655–681 (QQQP…TQQQ), 935–957 (NQNQ…CNNA), and 973–1125 (QLQP…QQLQ). Composition is skewed to low complexity over residues 48–70 (PQQQ…HLQQ) and 119–163 (PQAQ…NNNN). A compositionally biased stretch (low complexity) spans 256 to 275 (NNSNTNNVNNINTNNTNNNN). Composition is skewed to polar residues over residues 276-285 (KSGSIDQFGS) and 292-317 (YVNS…SHSP). A compositionally biased stretch (low complexity) spans 322 to 340 (INSNININSNLQSPQNIQQ). Positions 341–351 (TILSPNISPNH) are enriched in polar residues. Low complexity predominate over residues 352–373 (NNNNNNNNNNNNNNNNNNNNNN). Low complexity-rich tracts occupy residues 998–1022 (NSVN…NNNN) and 1037–1125 (QNNN…QQLQ).

This is an uncharacterized protein from Dictyostelium discoideum (Social amoeba).